A 211-amino-acid chain; its full sequence is Probable transcriptional regulatory protein SgaR (211 aa).

The Response regulatory domain occupies Glu-10–Ala-126. 4-aspartylphosphate is present on Asp-15. Residues Asn-141–Asn-206 form the HTH luxR-type domain. The H-T-H motif DNA-binding region spans Asn-165 to Lys-184.

Its function is as follows. Not known. Could act on the sgaA gene expression. This Hyphomicrobium methylovorum protein is Probable transcriptional regulatory protein SgaR (sgaR).